The following is a 371-amino-acid chain: MYNESPIIRRKSSRIYVGNVPIGDGAPIAVQSMTNTRTTDVEATVAQIKALENVGADIVRVSVPTMDAAEAFKLIKQQTSIPLIADIHFDYRIALKVAEYGVDCLRINPGNIGNEERIRSVVECARDMNIPIRIGVNGGSLEKDLMDKYKEPTPEALLESAMRHVDILDRLNFDQFKVSVKASDVFLAVESYRLLAKQIVQPLHLGITEAGGARAGSVKSAVGLGMLLADGIGDTLRISLAADPVEEIKVGFDILKSLRIRSRGINFIACPSCSRQEFDVISTVNELEQRLEDIVTPMDVSIIGCVVNGPGEALVSDIGLTGGNRMSGYYDDGVRQKERFDNTNIVDSLEAKIRAKAAIVAGRIPAQDLNK.

Residues cysteine 270, cysteine 273, cysteine 305, and glutamate 312 each contribute to the [4Fe-4S] cluster site.

The protein belongs to the IspG family. [4Fe-4S] cluster serves as cofactor.

It carries out the reaction (2E)-4-hydroxy-3-methylbut-2-enyl diphosphate + oxidized [flavodoxin] + H2O + 2 H(+) = 2-C-methyl-D-erythritol 2,4-cyclic diphosphate + reduced [flavodoxin]. It functions in the pathway isoprenoid biosynthesis; isopentenyl diphosphate biosynthesis via DXP pathway; isopentenyl diphosphate from 1-deoxy-D-xylulose 5-phosphate: step 5/6. In terms of biological role, converts 2C-methyl-D-erythritol 2,4-cyclodiphosphate (ME-2,4cPP) into 1-hydroxy-2-methyl-2-(E)-butenyl 4-diphosphate. In Shewanella pealeana (strain ATCC 700345 / ANG-SQ1), this protein is 4-hydroxy-3-methylbut-2-en-1-yl diphosphate synthase (flavodoxin).